Here is a 206-residue protein sequence, read N- to C-terminus: Small ribosomal subunit protein uS4A (206 aa).

Residues 98–163 enclose the S4 RNA-binding domain; sequence MRLDNVVYRL…SERFKMFAEN (66 aa).

The protein belongs to the universal ribosomal protein uS4 family. As to quaternary structure, part of the 30S ribosomal subunit. Contacts protein S5. The interaction surface between S4 and S5 is involved in control of translational fidelity.

Its function is as follows. One of the primary rRNA binding proteins, it binds directly to 16S rRNA where it nucleates assembly of the body of the 30S subunit. With S5 and S12 plays an important role in translational accuracy. The polypeptide is Small ribosomal subunit protein uS4A (Clostridium perfringens (strain ATCC 13124 / DSM 756 / JCM 1290 / NCIMB 6125 / NCTC 8237 / Type A)).